A 249-amino-acid chain; its full sequence is Probable transcriptional regulatory protein Sfum_0996 (249 aa).

Belongs to the TACO1 family.

The protein localises to the cytoplasm. The polypeptide is Probable transcriptional regulatory protein Sfum_0996 (Syntrophobacter fumaroxidans (strain DSM 10017 / MPOB)).